Here is a 66-residue protein sequence, read N- to C-terminus: Small ribosomal subunit protein eS30 (66 aa).

A disordered region spans residues 1-35; the sequence is MGKVHGGLNRAGKVRNATPKKDKEEKRKPKVGRAK.

This sequence belongs to the eukaryotic ribosomal protein eS30 family.

This is Small ribosomal subunit protein eS30 (rps30-1) from Dictyostelium discoideum (Social amoeba).